Here is a 332-residue protein sequence, read N- to C-terminus: Ornithine carbamoyltransferase, catabolic (332 aa).

Carbamoyl phosphate contacts are provided by residues 60 to 63 (STRT), Q87, R111, and 138 to 141 (HPTQ). L-ornithine contacts are provided by residues N170, D230, and 234–235 (SM). Carbamoyl phosphate is bound by residues 271–272 (CL) and R316.

It belongs to the aspartate/ornithine carbamoyltransferase superfamily. OTCase family.

It is found in the cytoplasm. It carries out the reaction carbamoyl phosphate + L-ornithine = L-citrulline + phosphate + H(+). It participates in amino-acid degradation; L-arginine degradation via ADI pathway; carbamoyl phosphate from L-arginine: step 2/2. Functionally, reversibly catalyzes the transfer of the carbamoyl group from carbamoyl phosphate (CP) to the N(epsilon) atom of ornithine (ORN) to produce L-citrulline. This chain is Ornithine carbamoyltransferase, catabolic, found in Bacillus thuringiensis subsp. konkukian (strain 97-27).